The primary structure comprises 359 residues: DNA integrity scanning protein DisA (359 aa).

The 139-residue stretch at 7-145 (DPTGRAVLRA…DGRRWVLEDS (139 aa)) folds into the DAC domain. Residues Gly74, Leu92, and 105 to 109 (TRHRT) contribute to the ATP site.

The protein belongs to the DisA family. In terms of assembly, homooctamer. Mg(2+) serves as cofactor.

It carries out the reaction 2 ATP = 3',3'-c-di-AMP + 2 diphosphate. Functionally, participates in a DNA-damage check-point. DisA forms globular foci that rapidly scan along the chromosomes searching for lesions. Its function is as follows. Also has diadenylate cyclase activity, catalyzing the condensation of 2 ATP molecules into cyclic di-AMP (c-di-AMP). c-di-AMP likely acts as a signaling molecule that may couple DNA integrity with a cellular process. This Beutenbergia cavernae (strain ATCC BAA-8 / DSM 12333 / CCUG 43141 / JCM 11478 / NBRC 16432 / NCIMB 13614 / HKI 0122) protein is DNA integrity scanning protein DisA.